Here is a 498-residue protein sequence, read N- to C-terminus: MLRATLARLEMAPKVTHIQEKLLINGKFVPAVSGKTFEVVNPADEKVIANVAEAEKADVDLAVKAARHAFESFRMTDCQWRRNLMLRLADILEKNSKEMAALESLDNGKPYEVALNVDVALSVECFRYCAGLADKVNGTVPPRSGNFLGIVKRQPIGVCGQIIPWNFPLLMAAFKLSPALAMGNTVVLKPAEQTPLTAVRLGEMVMEAGYPDGVLNILPGFGATAGSEIARHMDVDKIAFTGSTAVGHQVMQMAAETNLKKVSLELGGKSALIVCEDADLEEAAEVATTRVYFNTGQVCTASSRIYVHESVYDEFVSRLRKNAEARKVGPGNDTGNNMGPLVSKKQHERVLGYIEDGVKAGATVVTGGKKIGDKGYFVQPTIFSDVKEDMRICKEEIFGPVTCVMKYKDMDEVVKRANDSIYGLAAGICTRSMDTALRYSTYLNAGTVWVNTWNNFCPSMPFGGFKQSGIGRELGKEVVDMYTEPKAIHFASRSIVKP.

The transit peptide at 1 to 9 (MLRATLARL) directs the protein to the mitochondrion. 242–247 (GSTAVG) provides a ligand contact to NAD(+). Residue Glu265 is the Proton acceptor of the active site. Residue Cys299 is the Nucleophile of the active site.

Belongs to the aldehyde dehydrogenase family.

It is found in the mitochondrion. It catalyses the reaction an aldehyde + NAD(+) + H2O = a carboxylate + NADH + 2 H(+). Its pathway is alcohol metabolism; ethanol degradation; acetate from ethanol: step 2/2. In terms of biological role, could have an RNA-binding activity in addition of its catalytic role. The protein is Aldehyde dehydrogenase, mitochondrial (ALDH2) of Leishmania tarentolae (Sauroleishmania tarentolae).